The following is a 134-amino-acid chain: Small ribosomal subunit protein uS11 (134 aa).

Belongs to the universal ribosomal protein uS11 family. As to quaternary structure, part of the 30S ribosomal subunit. Interacts with proteins S7 and S18. Binds to IF-3.

Located on the platform of the 30S subunit, it bridges several disparate RNA helices of the 16S rRNA. Forms part of the Shine-Dalgarno cleft in the 70S ribosome. The chain is Small ribosomal subunit protein uS11 from Corynebacterium jeikeium (strain K411).